A 645-amino-acid chain; its full sequence is Chaperone protein DnaK (645 aa).

A Phosphothreonine; by autocatalysis modification is found at threonine 200. A disordered region spans residues 603-645 (AYSAQKDSGTSTDSTASDTSGNPEERVVDSEYQEIKKDDEDKK). A compositionally biased stretch (low complexity) spans 609 to 623 (DSGTSTDSTASDTSG). Residues 625-645 (PEERVVDSEYQEIKKDDEDKK) are compositionally biased toward basic and acidic residues.

The protein belongs to the heat shock protein 70 family.

Acts as a chaperone. In Anaplasma marginale (strain St. Maries), this protein is Chaperone protein DnaK.